Consider the following 581-residue polypeptide: Pyridine nucleotide-disulfide oxidoreductase domain-containing protein 2 (581 aa).

38 to 71 contributes to the FAD binding site; that stretch reads VVIGAGHNGLVAAAYLQRLGVNTAVFERRHVIGG.

Belongs to the carotenoid/retinoid oxidoreductase family. As to quaternary structure, interacts with COX5B; this interaction may contribute to localize PYROXD2 to the inner face of the inner mitochondrial membrane.

The protein localises to the mitochondrion matrix. In terms of biological role, probable oxidoreductase that may play a role as regulator of mitochondrial function. This chain is Pyridine nucleotide-disulfide oxidoreductase domain-containing protein 2, found in Mus musculus (Mouse).